The chain runs to 692 residues: Elongation factor G (692 aa).

In terms of domain architecture, tr-type G spans 8–282 (ERTRNIGIMA…AIVDYLPAPT (275 aa)). GTP contacts are provided by residues 17–24 (AHIDAGKT), 81–85 (DTPGH), and 135–138 (NKMD).

It belongs to the TRAFAC class translation factor GTPase superfamily. Classic translation factor GTPase family. EF-G/EF-2 subfamily.

The protein localises to the cytoplasm. Functionally, catalyzes the GTP-dependent ribosomal translocation step during translation elongation. During this step, the ribosome changes from the pre-translocational (PRE) to the post-translocational (POST) state as the newly formed A-site-bound peptidyl-tRNA and P-site-bound deacylated tRNA move to the P and E sites, respectively. Catalyzes the coordinated movement of the two tRNA molecules, the mRNA and conformational changes in the ribosome. This Desulforamulus reducens (strain ATCC BAA-1160 / DSM 100696 / MI-1) (Desulfotomaculum reducens) protein is Elongation factor G.